We begin with the raw amino-acid sequence, 104 residues long: Small ubiquitin-related modifier 3 (104 aa).

Glycyl lysine isopeptide (Lys-Gly) (interchain with G-Cter in SUMO2) cross-links involve residues lysine 5 and lysine 7. Lysine 11 is covalently cross-linked (Glycyl lysine isopeptide (Lys-Gly) (interchain with G-Cter in SUMO); alternate). Lysine 11 participates in a covalent cross-link: Glycyl lysine isopeptide (Lys-Gly) (interchain with G-Cter in SUMO2); alternate. Residues 15-92 form the Ubiquitin-like domain; sequence DHINLKVAGQ…IDVFQQQTGG (78 aa). Glycine 92 is covalently cross-linked (Glycyl lysine isopeptide (Gly-Lys) (interchain with K-? in acceptor proteins)). A propeptide spanning residues 93 to 104 is cleaved from the precursor; sequence SRVASCLLGSGL.

The protein belongs to the ubiquitin family. SUMO subfamily. As to quaternary structure, interacts with SAE2 and UBE2I. Covalently attached to a number of proteins. Interacts with USP25 (via ts SIM domain); the interaction sumoylates USP25 and inhibits its ubiquitin hydrolyzing activity. Interacts with BMAL1. In terms of processing, polymeric chains can be formed through Lys-11 cross-linking. Cleavage of precursor form by SENP1, SENP2 or SENP5 is necessary for function.

Its subcellular location is the cytoplasm. It is found in the nucleus. The protein resides in the PML body. In terms of biological role, ubiquitin-like protein which can be covalently attached to target lysines either as a monomer or as a lysine-linked polymer. Does not seem to be involved in protein degradation and may function as an antagonist of ubiquitin in the degradation process. Plays a role in a number of cellular processes such as nuclear transport, DNA replication and repair, mitosis and signal transduction. Covalent attachment to its substrates requires prior activation by the E1 complex SAE1-SAE2 and linkage to the E2 enzyme UBE2I, and can be promoted by an E3 ligase such as PIAS1-4, RANBP2 or CBX4. Plays a role in the regulation of sumoylation status of SETX. The polypeptide is Small ubiquitin-related modifier 3 (SUMO3) (Bos taurus (Bovine)).